The primary structure comprises 426 residues: Trigger factor (426 aa).

Residues 166 to 249 enclose the PPIase FKBP-type domain; that stretch reads GDIVTFDFKG…IIEVKARELP (84 aa).

It belongs to the FKBP-type PPIase family. Tig subfamily.

It localises to the cytoplasm. It catalyses the reaction [protein]-peptidylproline (omega=180) = [protein]-peptidylproline (omega=0). Functionally, involved in protein export. Acts as a chaperone by maintaining the newly synthesized protein in an open conformation. Functions as a peptidyl-prolyl cis-trans isomerase. This is Trigger factor from Mesoplasma florum (strain ATCC 33453 / NBRC 100688 / NCTC 11704 / L1) (Acholeplasma florum).